The following is a 265-amino-acid chain: Ribosomal RNA small subunit methyltransferase A (265 aa).

S-adenosyl-L-methionine contacts are provided by Asn-13, Leu-15, Gly-39, Glu-59, Asp-87, and Asn-108.

Belongs to the class I-like SAM-binding methyltransferase superfamily. rRNA adenine N(6)-methyltransferase family. RsmA subfamily.

The protein resides in the cytoplasm. It carries out the reaction adenosine(1518)/adenosine(1519) in 16S rRNA + 4 S-adenosyl-L-methionine = N(6)-dimethyladenosine(1518)/N(6)-dimethyladenosine(1519) in 16S rRNA + 4 S-adenosyl-L-homocysteine + 4 H(+). Specifically dimethylates two adjacent adenosines (A1518 and A1519) in the loop of a conserved hairpin near the 3'-end of 16S rRNA in the 30S particle. May play a critical role in biogenesis of 30S subunits. The polypeptide is Ribosomal RNA small subunit methyltransferase A (Aliarcobacter butzleri (strain RM4018) (Arcobacter butzleri)).